The sequence spans 633 residues: Peptidoglycan D,D-transpeptidase MrdA (633 aa).

A helical membrane pass occupies residues 22-42 (LVAFLGILLLTGVLIANLYNL). Serine 330 acts as the Acyl-ester intermediate in catalysis.

It belongs to the transpeptidase family. MrdA subfamily.

The protein resides in the cell inner membrane. It catalyses the reaction Preferential cleavage: (Ac)2-L-Lys-D-Ala-|-D-Ala. Also transpeptidation of peptidyl-alanyl moieties that are N-acyl substituents of D-alanine.. Its pathway is cell wall biogenesis; peptidoglycan biosynthesis. Catalyzes cross-linking of the peptidoglycan cell wall. The protein is Peptidoglycan D,D-transpeptidase MrdA of Escherichia coli O157:H7.